The sequence spans 136 residues: Class I hydrophobin 16 (136 aa).

The N-terminal stretch at 1-19 (MKFTSVIALVATAATLVGA) is a signal peptide. 4 cysteine pairs are disulfide-bonded: C58–C115, C65–C109, C66–C99, and C116–C129. N-linked (GlcNAc...) asparagine glycosylation occurs at N74.

It belongs to the fungal hydrophobin family. In terms of assembly, self-assembles to form functional amyloid fibrils called rodlets. Self-assembly into fibrillar rodlets occurs spontaneously at hydrophobic:hydrophilic interfaces and the rodlets further associate laterally to form amphipathic monolayers.

The protein localises to the secreted. It localises to the cell wall. Its function is as follows. Aerial growth, conidiation, and dispersal of filamentous fungi in the environment rely upon a capability of their secreting small amphipathic proteins called hydrophobins (HPBs) with low sequence identity. Class I can self-assemble into an outermost layer of rodlet bundles on aerial cell surfaces, conferring cellular hydrophobicity that supports fungal growth, development and dispersal; whereas Class II form highly ordered films at water-air interfaces through intermolecular interactions but contribute nothing to the rodlet structure. Hydph16 is a class I hydrophobin that has specific functions in aerial mycelium formation, cell wall stress protection, and cell wall structure formation, but does not seem to be involved in mycelial hydrophobicity. Specifically functions in resisting cell wall synthesis inhibitors. This Pleurotus ostreatus (strain PC15) (Oyster mushroom) protein is Class I hydrophobin 16.